Consider the following 179-residue polypeptide: Cytochrome b6-f complex iron-sulfur subunit 1 (179 aa).

A helical transmembrane segment spans residues 21 to 43; it reads LLTFGTVTGVALGALYPVVNYFI. The region spanning 61 to 162 is the Rieske domain; it reads GNDVSVSKFL…AKTENDKIVL (102 aa). Positions 108, 110, 126, and 129 each coordinate [2Fe-2S] cluster. An intrachain disulfide couples Cys-113 to Cys-128.

It belongs to the Rieske iron-sulfur protein family. As to quaternary structure, the 4 large subunits of the cytochrome b6-f complex are cytochrome b6, subunit IV (17 kDa polypeptide, PetD), cytochrome f and the Rieske protein, while the 4 small subunits are PetG, PetL, PetM and PetN. The complex functions as a dimer. [2Fe-2S] cluster is required as a cofactor.

The protein resides in the cellular thylakoid membrane. It carries out the reaction 2 oxidized [plastocyanin] + a plastoquinol + 2 H(+)(in) = 2 reduced [plastocyanin] + a plastoquinone + 4 H(+)(out). Its function is as follows. Component of the cytochrome b6-f complex, which mediates electron transfer between photosystem II (PSII) and photosystem I (PSI), cyclic electron flow around PSI, and state transitions. The protein is Cytochrome b6-f complex iron-sulfur subunit 1 of Trichormus variabilis (strain ATCC 29413 / PCC 7937) (Anabaena variabilis).